Consider the following 450-residue polypeptide: ATP-dependent protease ATPase subunit HslU (450 aa).

Residues I18 and 60 to 65 each bind ATP; that span reads GVGKTE. A compositionally biased stretch (polar residues) spans 140–151; the sequence is KTSSSGWAQQQE. A disordered region spans residues 140 to 162; the sequence is KTSSSGWAQQQEETPENDDQRGT. Positions 263, 328, and 400 each coordinate ATP.

The protein belongs to the ClpX chaperone family. HslU subfamily. As to quaternary structure, a double ring-shaped homohexamer of HslV is capped on each side by a ring-shaped HslU homohexamer. The assembly of the HslU/HslV complex is dependent on binding of ATP.

The protein localises to the cytoplasm. Functionally, ATPase subunit of a proteasome-like degradation complex; this subunit has chaperone activity. The binding of ATP and its subsequent hydrolysis by HslU are essential for unfolding of protein substrates subsequently hydrolyzed by HslV. HslU recognizes the N-terminal part of its protein substrates and unfolds these before they are guided to HslV for hydrolysis. The polypeptide is ATP-dependent protease ATPase subunit HslU (Idiomarina loihiensis (strain ATCC BAA-735 / DSM 15497 / L2-TR)).